The primary structure comprises 426 residues: Pannexin-1 (426 aa).

Residues 1–40 (MAIAHLATEYVFSDFLLKEPTEPKFKGLRLELAVDKMVTC) lie on the Cytoplasmic side of the membrane. Cysteine 40 carries the S-nitrosocysteine modification. A helical transmembrane segment spans residues 41–61 (IAVGLPLLLISLAFAQEISIG). The Extracellular segment spans residues 62–106 (TQISCFSPSSFSWRQAAFVDSYCWAAVQQKNSLQSESGNLPLWLH). Cystine bridges form between cysteine 66–cysteine 264 and cysteine 84–cysteine 245. Residues 107 to 127 (KFFPYILLLFAILLYLPALFW) form a helical membrane-spanning segment. Residues 128–216 (RFAAAPHLCS…HLIMKYISCR (89 aa)) are Cytoplasmic-facing. Phosphotyrosine is present on tyrosine 198. A helical membrane pass occupies residues 217–237 (LVTFAVVLLACIYLSYYFSLS). Over 238-277 (SLSDEFLCSIKSGVLRNDSTIPDSFQCKLIAVGIFQLLSL) the chain is Extracellular. Asparagine 254 is a glycosylation site (N-linked (GlcNAc...) asparagine). Residues 278–298 (INLLVYALLVPVVIYTLFVPF) form a helical membrane-spanning segment. Over 299 to 426 (RQKTDVLKVY…SRQRLLNSSC (128 aa)) the chain is Cytoplasmic. Residue cysteine 346 is modified to S-nitrosocysteine. The segment at 407–426 (ETAANNGEKNSRQRLLNSSC) is disordered.

This sequence belongs to the pannexin family. In terms of assembly, homoheptameric. Post-translationally, S-nitrosylation inhibits channel currents and ATP release. N-glycosylation plays a role in cell surface targeting. Glycosylation at its extracellular surface makes unlikely that two oligomers could dock to form an intercellular channel such as in gap junctions. Exists in three glycosylation states: non-glycosylated (GLY0), high-mannose glycosylated (GLY1), and fully mature glycosylated (GLY2). In terms of processing, cleaved by CASP3 and CASP7 during apoptosis. Cleavage opens the channel for the release of metabolites and induces plasma membrane permeability during apoptosis. Post-translationally, phosphorylated at Tyr-198 by SRC. Phosphorylation activates ATP release. Constitutively phosphorylated in vascular smooth muscle cells. Expressed in the eye, thyroid, prostate, kidney and liver. Abundantly expressed in the CNS, including hippocampus, olfactory bulb, cortex, cerebellum and white matter.

It is found in the cell membrane. It localises to the endoplasmic reticulum membrane. It catalyses the reaction Ca(2+)(in) = Ca(2+)(out). It carries out the reaction ATP(in) = ATP(out). The enzyme catalyses K(+)(in) = K(+)(out). The catalysed reaction is chloride(in) = chloride(out). It catalyses the reaction iodide(out) = iodide(in). It carries out the reaction Na(+)(in) = Na(+)(out). The enzyme catalyses nitrate(in) = nitrate(out). The catalysed reaction is L-aspartate(out) = L-aspartate(in). It catalyses the reaction L-glutamate(out) = L-glutamate(in). It carries out the reaction D-gluconate(in) = D-gluconate(out). The enzyme catalyses spermidine(in) = spermidine(out). Functionally, ion channel involved in a variety of physiological functions such as blood pressure regulation, apoptotic cell clearance and oogenesis. Forms anion-selective channels with relatively low conductance and an order of permeabilities: nitrate&gt;iodide&gt;chlroride&gt;&gt;aspartate=glutamate=gluconate. Can release ATP upon activation through phosphorylation or cleavage at C-terminus. May play a role as a Ca(2+)-leak channel to regulate ER Ca(2+) homeostasis. In terms of biological role, during apoptosis, the C terminal tail is cleaved by caspases, which opens the main pore acting as a large-pore ATP efflux channel with a broad distribution, which allows the regulated release of molecules and ions smaller than 1 kDa, such as nucleotides ATP and UTP, and selective plasma membrane permeability to attract phagocytes that engulf the dying cells. In Rattus norvegicus (Rat), this protein is Pannexin-1 (Panx1).